The following is a 404-amino-acid chain: Cysteine desulfurase IscS (404 aa).

Residues 75–76 (AT), asparagine 155, glutamine 183, and 203–205 (SGH) contribute to the pyridoxal 5'-phosphate site. An N6-(pyridoxal phosphate)lysine modification is found at lysine 206. Residue threonine 243 coordinates pyridoxal 5'-phosphate. The Cysteine persulfide intermediate role is filled by cysteine 328. [2Fe-2S] cluster is bound at residue cysteine 328.

The protein belongs to the class-V pyridoxal-phosphate-dependent aminotransferase family. NifS/IscS subfamily. In terms of assembly, homodimer. Forms a heterotetramer with IscU, interacts with other sulfur acceptors. Requires pyridoxal 5'-phosphate as cofactor.

It localises to the cytoplasm. It catalyses the reaction (sulfur carrier)-H + L-cysteine = (sulfur carrier)-SH + L-alanine. The protein operates within cofactor biosynthesis; iron-sulfur cluster biosynthesis. Functionally, master enzyme that delivers sulfur to a number of partners involved in Fe-S cluster assembly, tRNA modification or cofactor biosynthesis. Catalyzes the removal of elemental sulfur and selenium atoms from cysteine and selenocysteine to produce alanine. Functions as a sulfur delivery protein for Fe-S cluster synthesis onto IscU, an Fe-S scaffold assembly protein, as well as other S acceptor proteins. Also functions as a selenium delivery protein in the pathway for the biosynthesis of selenophosphate. The chain is Cysteine desulfurase IscS from Salmonella arizonae (strain ATCC BAA-731 / CDC346-86 / RSK2980).